The following is a 143-amino-acid chain: Boletus edulis lectin (143 aa).

Beta-D-Gal-(1-&gt;3)-alpha-D-GalNAc contacts are provided by residues Ala-30, 49 to 50 (SG), and 72 to 73 (HN). Residues 49–50 (SG) and 72–73 (HN) each bind N-acetyl-alpha-D-galactosamine. Residues 79–82 (DVVT), Arg-103, and Tyr-114 each bind N,N'-diacetylchitobiose. N-acetyl-alpha-D-glucosamine-binding positions include 79–82 (DVVT), Arg-103, and Tyr-114.

The protein belongs to the fungal fruit body lectin family. Homotetramer.

Lectin that recognizes O-linked galactose-beta-1,3-N-acetylgalactosamine, a disaccharide (Thomsen-Friedenreich antigen or T-disaccharide), present on cell surface glycoproteins. Can also bind chitin, N,N'-diacetylchitobiose, N-acetylgalactosamine and N-acetylglucosamine. Inhibits proliferation of colon, breast and liver cancer cell lines (in vitro). In Boletus edulis (King bolete), this protein is Boletus edulis lectin.